The following is a 275-amino-acid chain: Small ribosomal subunit protein uS3 (275 aa).

One can recognise a KH type-2 domain in the interval 38–106 (IRKLLATGLE…QVQLNILEVK (69 aa)). Residues 215 to 275 (AAAAPASDRP…AEAPAESTES (61 aa)) form a disordered region. Residues 237–275 (SGSAGTTATSTEAGRAATSDAPAAGTAAAAEAPAESTES) are compositionally biased toward low complexity.

This sequence belongs to the universal ribosomal protein uS3 family. As to quaternary structure, part of the 30S ribosomal subunit. Forms a tight complex with proteins S10 and S14.

Binds the lower part of the 30S subunit head. Binds mRNA in the 70S ribosome, positioning it for translation. In Mycolicibacterium smegmatis (strain ATCC 700084 / mc(2)155) (Mycobacterium smegmatis), this protein is Small ribosomal subunit protein uS3.